Here is a 241-residue protein sequence, read N- to C-terminus: Large ribosomal subunit protein uL3 (241 aa).

2 disordered regions span residues 139–164 and 215–241; these read VSHR…KMPG and DAPK…QEGV. Glutamine 151 bears the N5-methylglutamine mark. Over residues 225 to 241 the composition is skewed to low complexity; it reads ANGGEEAAAPAAEQEGV.

Belongs to the universal ribosomal protein uL3 family. In terms of assembly, part of the 50S ribosomal subunit. Forms a cluster with proteins L14 and L19. Methylated by PrmB.

One of the primary rRNA binding proteins, it binds directly near the 3'-end of the 23S rRNA, where it nucleates assembly of the 50S subunit. This is Large ribosomal subunit protein uL3 from Rhodopseudomonas palustris (strain HaA2).